The chain runs to 545 residues: Eukaryotic translation initiation factor 3 subunit D-2 (545 aa).

Basic residues predominate over residues Phe99–Thr113. Residues Phe99–Arg158 form a disordered region. Gly residues predominate over residues Gly114 to Pro127. The segment covering Glu133–Arg145 has biased composition (basic and acidic residues). The RNA gate stretch occupies residues Gln287–Pro301.

The protein belongs to the eIF-3 subunit D family. As to quaternary structure, component of the eukaryotic translation initiation factor 3 (eIF-3) complex. The eIF-3 complex interacts with pix.

The protein resides in the cytoplasm. In terms of biological role, mRNA cap-binding component of the eukaryotic translation initiation factor 3 (eIF-3) complex, which is involved in protein synthesis of a specialized repertoire of mRNAs and, together with other initiation factors, stimulates binding of mRNA and methionyl-tRNAi to the 40S ribosome. The eIF-3 complex specifically targets and initiates translation of a subset of mRNAs involved in cell proliferation. In the eIF-3 complex, eif3d specifically recognizes and binds the 7-methylguanosine cap of a subset of mRNAs. This chain is Eukaryotic translation initiation factor 3 subunit D-2, found in Drosophila persimilis (Fruit fly).